The chain runs to 192 residues: ATP-dependent Clp protease proteolytic subunit 1 (192 aa).

Residue S92 is the Nucleophile of the active site. Residue H117 is part of the active site.

The protein belongs to the peptidase S14 family. As to quaternary structure, fourteen ClpP subunits assemble into 2 heptameric rings which stack back to back to give a disk-like structure with a central cavity, resembling the structure of eukaryotic proteasomes.

The protein resides in the cytoplasm. It carries out the reaction Hydrolysis of proteins to small peptides in the presence of ATP and magnesium. alpha-casein is the usual test substrate. In the absence of ATP, only oligopeptides shorter than five residues are hydrolyzed (such as succinyl-Leu-Tyr-|-NHMec, and Leu-Tyr-Leu-|-Tyr-Trp, in which cleavage of the -Tyr-|-Leu- and -Tyr-|-Trp bonds also occurs).. Functionally, cleaves peptides in various proteins in a process that requires ATP hydrolysis. Has a chymotrypsin-like activity. Plays a major role in the degradation of misfolded proteins. This is ATP-dependent Clp protease proteolytic subunit 1 from Chlamydia abortus (strain DSM 27085 / S26/3) (Chlamydophila abortus).